The sequence spans 236 residues: Uridylate kinase (236 aa).

Lys-10–Gly-13 is a binding site for ATP. Position 52 (Gly-52) interacts with UMP. ATP is bound by residues Gly-53 and Arg-57. UMP is bound by residues Asp-72 and Thr-133–Thr-140. The ATP site is built by Thr-160, Tyr-166, and Asp-169.

This sequence belongs to the UMP kinase family. In terms of assembly, homohexamer.

It is found in the cytoplasm. The enzyme catalyses UMP + ATP = UDP + ADP. Its pathway is pyrimidine metabolism; CTP biosynthesis via de novo pathway; UDP from UMP (UMPK route): step 1/1. With respect to regulation, inhibited by UTP. Its function is as follows. Catalyzes the reversible phosphorylation of UMP to UDP. This Bacteroides fragilis (strain ATCC 25285 / DSM 2151 / CCUG 4856 / JCM 11019 / LMG 10263 / NCTC 9343 / Onslow / VPI 2553 / EN-2) protein is Uridylate kinase.